The sequence spans 704 residues: MAKITKTFQYGKHTVTLETGEVARQASGAVIVKMDDTVLLVTAVAAKTAREGQDFFPLTVDYQEKFYAGGRIPGGFFKREGRATEKETLISRLIDRPIRPLFPEDYKNEVQIIATVMSMNPDIDGDIAALIGASAALSLAGTPFNGPIGAAKVGYKNGEYILNPTITELKDSQLELVVAGTANAVLMVESEAALLSEEVMLGAVTFGHREMQKVINIINELTVEAGTKPSTWVAPAKNTALISALKEAVGAQLAGAFQVRDKLQRRDAISAIKKDVLESLAGRVASEGWSSAELSKEFGELEYHTMRDSVLETKVRIDGRALDTVRPISVQAGVLPRTHGSALFTRGETQAIVVTTLGTARDGQVIDAVAGEYKENFLFHYNFPPYSVGECGRFGAPKRREIGHGRLAKRGVLAVMPSLEEFPYTIRVVSEITESNGSSSMASVCGSSLALMDAGVPVKAPVAGIAMGLVKEDDRFVVLSDILGDEDHLGDMDFKVAGTAEGVSALQMDIKIEGITEEIMKQALQQAKAGRLHILGEMSKALTTPRQELSDYAPRLLTIKIHPDKIREVIGKGGSTIQAITKETGTQIDIQDDGTIIIASVNAIAAQAAKSRIEQITSDVEPGRIYEGKVAKIMDFGAFVTILPGKDGLVHVSQISSERVEKVGDKLKEGDLVRVKVLEVDKQGRIRLSIKAVEEGEGVPASAE.

Residues aspartate 487 and aspartate 493 each contribute to the Mg(2+) site. The KH domain occupies 554-613 (PRLLTIKIHPDKIREVIGKGGSTIQAITKETGTQIDIQDDGTIIIASVNAIAAQAAKSRI). Residues 623-691 (GRIYEGKVAK…KQGRIRLSIK (69 aa)) enclose the S1 motif domain.

This sequence belongs to the polyribonucleotide nucleotidyltransferase family. As to quaternary structure, component of the RNA degradosome, which is a multiprotein complex involved in RNA processing and mRNA degradation. Requires Mg(2+) as cofactor.

The protein localises to the cytoplasm. The catalysed reaction is RNA(n+1) + phosphate = RNA(n) + a ribonucleoside 5'-diphosphate. Functionally, involved in mRNA degradation. Catalyzes the phosphorolysis of single-stranded polyribonucleotides processively in the 3'- to 5'-direction. This Xanthomonas campestris pv. campestris (strain B100) protein is Polyribonucleotide nucleotidyltransferase.